The chain runs to 451 residues: MSQGYSEKVKELLDSVGAAFFDRVKIKLADGLVLEGLLMPRPAFGDPDVVVLKLDNGYNIGISLQRIVSVELLEKFSPREAPTPGEEEGSQEDFGQPEPRVFFVGTGGTIASRVDYVTGAVYPYFTAEELYSMIPELKRLARISSETLFSIFSEDMTPSHWQQLASKIGEIFRRESDVKGVVVAHGTDTLHYSAAAMAFAVQEAPGPIVFVGAQRSSDRPSSDAALNVIGATVVAVHAPFAESVIAMHGSVNDDTILVHRGVRARKMHTSRRDAFMSINSKPIAEVDPLRGSLKLSTSTYKGRGDDVVVQASFSDKVALVKFYPGMSPDIFDFYLEKGFKGLVIEGTGLGHVSTALIDSVRRLVREGVFVAMASQCIFGRVNMNVYRTGVELIKAGVVPAGDMIPETAYVKLSWILGQTEDPEEIQRLFTANLAFEISERSEFDHYPGARW.

Residues 78-97 (PREAPTPGEEEGSQEDFGQP) form a disordered region. An Asparaginase/glutaminase domain is found at 99–432 (PRVFFVGTGG…EEIQRLFTAN (334 aa)). Catalysis depends on residues Thr-109, Thr-187, Asp-188, and Lys-266.

The protein belongs to the asparaginase 1 family. GatD subfamily. Heterodimer of GatD and GatE.

The catalysed reaction is L-glutamyl-tRNA(Gln) + L-glutamine + ATP + H2O = L-glutaminyl-tRNA(Gln) + L-glutamate + ADP + phosphate + H(+). In terms of biological role, allows the formation of correctly charged Gln-tRNA(Gln) through the transamidation of misacylated Glu-tRNA(Gln) in organisms which lack glutaminyl-tRNA synthetase. The reaction takes place in the presence of glutamine and ATP through an activated gamma-phospho-Glu-tRNA(Gln). The GatDE system is specific for glutamate and does not act on aspartate. The sequence is that of Glutamyl-tRNA(Gln) amidotransferase subunit D from Thermofilum pendens (strain DSM 2475 / Hrk 5).